The sequence spans 207 residues: Large ribosomal subunit protein uL3c (207 aa).

The tract at residues 128 to 148 (FTRGPMTHGSKNHRAPGSIGM) is disordered.

Belongs to the universal ribosomal protein uL3 family. Part of the 50S ribosomal subunit.

The protein localises to the plastid. The protein resides in the chloroplast. Functionally, one of the primary rRNA binding proteins, it binds directly near the 3'-end of the 23S rRNA, where it nucleates assembly of the 50S subunit. The sequence is that of Large ribosomal subunit protein uL3c (rpl3) from Trieres chinensis (Marine centric diatom).